The following is a 460-amino-acid chain: Muscarinic acetylcholine receptor M1 (460 aa).

Topologically, residues 1 to 22 are extracellular; the sequence is MNTSAPPAVSPNITVLAPGKGP. N2 and N12 each carry an N-linked (GlcNAc...) asparagine glycan. Residues 23-48 form a helical membrane-spanning segment; it reads WQVAFIGITTGLLSLATVTGNLLVLI. Over 49–62 the chain is Cytoplasmic; sequence SFKVNTELKTVNNY. A helical transmembrane segment spans residues 63-84; it reads FLLSLACADLIIGTFSMNLYTT. Over 85-95 the chain is Extracellular; sequence YLLMGHWALGT. A helical transmembrane segment spans residues 96–121; sequence LACDLWLALDYVASNASVMNLLLISF. Residues C98 and C178 are joined by a disulfide bond. At 122-142 the chain is on the cytoplasmic side; sequence DRYFSVTRPLSYRAKRTPRRA. Residues 143 to 164 form a helical membrane-spanning segment; that stretch reads ALMIGLAWLVSFVLWAPAILFW. The Extracellular portion of the chain corresponds to 165-185; it reads QYLVGERTVLAGQCYIQFLSQ. The chain crosses the membrane as a helical span at residues 186–209; sequence PIITFGTAMAAFYLPVTVMCTLYW. Over 210–366 the chain is Cytoplasmic; that stretch reads RIYRETESRA…LVKEKKAART (157 aa). Disordered stretches follow at residues 225-256, 274-297, and 310-351; these read LQGS…GTPP, WKEE…EEPG, and EAQA…QLAK. The residue at position 230 (T230) is a Phosphothreonine. The segment covering 238-247 has biased composition (low complexity); it reads SSSSERSQPG. Positions 328-343 are enriched in basic residues; it reads RPTKKGRDRAGKGQKP. Residues 367-390 form a helical membrane-spanning segment; it reads LSAILLAFILTWTPYNIMVLVSTF. The Extracellular portion of the chain corresponds to 391-397; that stretch reads CKDCVPE. Residues 398 to 420 traverse the membrane as a helical segment; sequence TLWELGYWLCYVNSTINPMCYAL. At 421 to 460 the chain is on the cytoplasmic side; that stretch reads CNKAFRDTFRLLLLCRWDKRRWRKIPKRPGSVHRTPSRQC. T428 carries the post-translational modification Phosphothreonine. At S451 the chain carries Phosphoserine. At T455 the chain carries Phosphothreonine. At S457 the chain carries Phosphoserine.

The protein belongs to the G-protein coupled receptor 1 family. Muscarinic acetylcholine receptor subfamily. CHRM1 sub-subfamily. As to quaternary structure, interacts with GPRASP2. Interacts with TMEM147.

The protein resides in the cell membrane. The protein localises to the postsynaptic cell membrane. The muscarinic acetylcholine receptor mediates various cellular responses, including inhibition of adenylate cyclase, breakdown of phosphoinositides and modulation of potassium channels through the action of G proteins. Primary transducing effect is Pi turnover. This Pongo abelii (Sumatran orangutan) protein is Muscarinic acetylcholine receptor M1 (CHRM1).